We begin with the raw amino-acid sequence, 193 residues long: Holliday junction branch migration complex subunit RuvA (193 aa).

The tract at residues 1-64 is domain I; the sequence is MIGRIAGVLL…EDAHLLYGFG (64 aa). The domain II stretch occupies residues 65-139; that stretch reads TAEERSTFRE…GKIGADLGAM (75 aa). Residues 139–143 form a flexible linker region; it reads MAGAA. The segment at 144–193 is domain III; that stretch reads SASDHASDILNALLALGYSEKEALTAVKNVPAGTGVSEGIKLALKALSKG.

The protein belongs to the RuvA family. In terms of assembly, homotetramer. Forms an RuvA(8)-RuvB(12)-Holliday junction (HJ) complex. HJ DNA is sandwiched between 2 RuvA tetramers; dsDNA enters through RuvA and exits via RuvB. An RuvB hexamer assembles on each DNA strand where it exits the tetramer. Each RuvB hexamer is contacted by two RuvA subunits (via domain III) on 2 adjacent RuvB subunits; this complex drives branch migration. In the full resolvosome a probable DNA-RuvA(4)-RuvB(12)-RuvC(2) complex forms which resolves the HJ.

It localises to the cytoplasm. Functionally, the RuvA-RuvB-RuvC complex processes Holliday junction (HJ) DNA during genetic recombination and DNA repair, while the RuvA-RuvB complex plays an important role in the rescue of blocked DNA replication forks via replication fork reversal (RFR). RuvA specifically binds to HJ cruciform DNA, conferring on it an open structure. The RuvB hexamer acts as an ATP-dependent pump, pulling dsDNA into and through the RuvAB complex. HJ branch migration allows RuvC to scan DNA until it finds its consensus sequence, where it cleaves and resolves the cruciform DNA. This chain is Holliday junction branch migration complex subunit RuvA, found in Paraburkholderia phytofirmans (strain DSM 17436 / LMG 22146 / PsJN) (Burkholderia phytofirmans).